Here is a 234-residue protein sequence, read N- to C-terminus: DNA repair protein RecO (234 aa).

This sequence belongs to the RecO family.

In terms of biological role, involved in DNA repair and RecF pathway recombination. The chain is DNA repair protein RecO from Coxiella burnetii (strain RSA 331 / Henzerling II).